Reading from the N-terminus, the 241-residue chain is Small ribosomal subunit protein eS4 (241 aa).

Residues 43–105 (IPLVMVLRDI…INKTFRVLQD (63 aa)) form the S4 RNA-binding domain.

The protein belongs to the eukaryotic ribosomal protein eS4 family.

The sequence is that of Small ribosomal subunit protein eS4 from Methanosphaera stadtmanae (strain ATCC 43021 / DSM 3091 / JCM 11832 / MCB-3).